The following is a 737-amino-acid chain: Alpha-adducin (737 aa).

Met1 carries the N-acetylmethionine modification. A disordered region spans residues 1-21 (MNGDSRAAVVTSPPPTTAPHK). Ser12 is modified (phosphoserine). Phosphoserine; by PKA is present on Ser59. Ser64 carries the post-translational modification Phosphoserine. At Thr331 the chain carries Phosphothreonine. Phosphoserine is present on residues Ser334, Ser353, Ser355, Ser358, and Ser366. Position 408 is a phosphoserine; by PKA (Ser408). Positions 419–430 (YSFTSDGDSGTC) are enriched in polar residues. Disordered regions lie at residues 419–490 (YSFT…NLFV) and 576–737 (RREV…KSES). Ser427 carries the phosphoserine modification. Phosphothreonine is present on Thr429. At Ser431 the chain carries Phosphoserine. A Phosphoserine; by PKA modification is found at Ser436. At Thr445 the chain carries Phosphothreonine; by ROCK2. Residues Ser464 and Ser465 each carry the phosphoserine modification. Phosphothreonine; by ROCK2 is present on Thr480. At Ser481 the chain carries Phosphoserine; by PKA. Basic and acidic residues predominate over residues 576-601 (RREVERKQKGSEENLDEAREQKEKSP). Residues Ser586, Ser600, and Ser613 each carry the phosphoserine modification. Pro residues predominate over residues 602–614 (PDQPAVPYPPPST). Thr614 is subject to Phosphothreonine. Phosphoserine occurs at positions 678, 707, 710, and 714. Residues 687 to 714 (PVAEEAAPSAAEEGAAADPGSDGSPGKS) are compositionally biased toward low complexity. Over residues 715 to 737 (PSKKKKKFRTPSFLKKSKKKSES) the composition is skewed to basic residues. The residue at position 716 (Ser716) is a Phosphoserine; by PKC. The interval 717–734 (KKKKKFRTPSFLKKSKKK) is interaction with calmodulin. The residue at position 726 (Ser726) is a Phosphoserine; by PKA and PKC.

It belongs to the aldolase class II family. Adducin subfamily. Heterodimer of an alpha and a beta subunit or an alpha and a gamma subunit.

It is found in the cytoplasm. It localises to the cytoskeleton. Its subcellular location is the cell membrane. In terms of biological role, membrane-cytoskeleton-associated protein that promotes the assembly of the spectrin-actin network. Binds to calmodulin. The polypeptide is Alpha-adducin (ADD1) (Pongo abelii (Sumatran orangutan)).